A 905-amino-acid polypeptide reads, in one-letter code: TRPM8 channel-associated factor homolog (905 aa).

A Peptidase M60 domain is found at 524 to 823; sequence NAWRSTGLYL…TYLQLQEGFG (300 aa).

It belongs to the TCAF family.

In terms of biological role, may play a role in the regulation of the cation channel TRPM8 activity. In Xenopus laevis (African clawed frog), this protein is TRPM8 channel-associated factor homolog (tcaf).